The chain runs to 284 residues: L-ribulose-5-phosphate 3-epimerase UlaE (284 aa).

The protein belongs to the L-ribulose-5-phosphate 3-epimerase family.

It carries out the reaction L-ribulose 5-phosphate = L-xylulose 5-phosphate. Its pathway is cofactor degradation; L-ascorbate degradation; D-xylulose 5-phosphate from L-ascorbate: step 3/4. Functionally, catalyzes the isomerization of L-xylulose-5-phosphate to L-ribulose-5-phosphate. Is involved in the anaerobic L-ascorbate utilization. The chain is L-ribulose-5-phosphate 3-epimerase UlaE from Escherichia coli O139:H28 (strain E24377A / ETEC).